Reading from the N-terminus, the 138-residue chain is Large ribosomal subunit protein bL17 (138 aa).

Belongs to the bacterial ribosomal protein bL17 family. Part of the 50S ribosomal subunit. Contacts protein L32.

The chain is Large ribosomal subunit protein bL17 from Halorhodospira halophila (strain DSM 244 / SL1) (Ectothiorhodospira halophila (strain DSM 244 / SL1)).